Consider the following 182-residue polypeptide: Orotate phosphoribosyltransferase (182 aa).

5-phospho-alpha-D-ribose 1-diphosphate is bound by residues Arg93, Lys94, Lys97, and 119–127 (EDIATTGTS). Thr123 and Arg151 together coordinate orotate.

It belongs to the purine/pyrimidine phosphoribosyltransferase family. PyrE subfamily. In terms of assembly, homodimer. Requires Mg(2+) as cofactor.

The catalysed reaction is orotidine 5'-phosphate + diphosphate = orotate + 5-phospho-alpha-D-ribose 1-diphosphate. Its pathway is pyrimidine metabolism; UMP biosynthesis via de novo pathway; UMP from orotate: step 1/2. In terms of biological role, catalyzes the transfer of a ribosyl phosphate group from 5-phosphoribose 1-diphosphate to orotate, leading to the formation of orotidine monophosphate (OMP). The polypeptide is Orotate phosphoribosyltransferase (Haloquadratum walsbyi (strain DSM 16790 / HBSQ001)).